Here is a 138-residue protein sequence, read N- to C-terminus: Nucleoside diphosphate kinase (138 aa).

The ATP site is built by K9, F57, R85, T91, R102, and N112. The active-site Pros-phosphohistidine intermediate is the H115.

The protein belongs to the NDK family. In terms of assembly, homotetramer. The cofactor is Mg(2+).

The protein localises to the cytoplasm. The catalysed reaction is a 2'-deoxyribonucleoside 5'-diphosphate + ATP = a 2'-deoxyribonucleoside 5'-triphosphate + ADP. It carries out the reaction a ribonucleoside 5'-diphosphate + ATP = a ribonucleoside 5'-triphosphate + ADP. Functionally, major role in the synthesis of nucleoside triphosphates other than ATP. The ATP gamma phosphate is transferred to the NDP beta phosphate via a ping-pong mechanism, using a phosphorylated active-site intermediate. This Deinococcus geothermalis (strain DSM 11300 / CIP 105573 / AG-3a) protein is Nucleoside diphosphate kinase.